Consider the following 223-residue polypeptide: Guanylate kinase (223 aa).

The tract at residues Met1–Arg22 is disordered. Positions Pro7 to Gly19 are enriched in basic and acidic residues. Residues Gly21–Val201 enclose the Guanylate kinase-like domain. Residue Gly28 to Ser35 coordinates ATP. Residues Ala204–Asp223 are disordered. Residues Gly212 to Asp223 are compositionally biased toward polar residues.

Belongs to the guanylate kinase family.

The protein resides in the cytoplasm. The enzyme catalyses GMP + ATP = GDP + ADP. In terms of biological role, essential for recycling GMP and indirectly, cGMP. The protein is Guanylate kinase of Mycolicibacterium paratuberculosis (strain ATCC BAA-968 / K-10) (Mycobacterium paratuberculosis).